A 316-amino-acid polypeptide reads, in one-letter code: Pantothenate kinase (316 aa).

An ATP-binding site is contributed by 95-102 (GSVAVGKS).

The protein belongs to the prokaryotic pantothenate kinase family.

The protein localises to the cytoplasm. The enzyme catalyses (R)-pantothenate + ATP = (R)-4'-phosphopantothenate + ADP + H(+). It functions in the pathway cofactor biosynthesis; coenzyme A biosynthesis; CoA from (R)-pantothenate: step 1/5. This chain is Pantothenate kinase, found in Shewanella baltica (strain OS195).